Consider the following 620-residue polypeptide: Chaperone protein HtpG (620 aa).

The segment at 1-334 (MTTTDTAPQS…SEDLPLNLSR (334 aa)) is a; substrate-binding. A b region spans residues 335–548 (EMLQNNPQLA…GLGPDRALER (214 aa)). Residues 549-620 (MLAQQNRGAA…RLNRLVLRAL (72 aa)) are c.

Belongs to the heat shock protein 90 family. Homodimer.

The protein localises to the cytoplasm. Molecular chaperone. Has ATPase activity. This Rhodopseudomonas palustris (strain BisB18) protein is Chaperone protein HtpG.